The chain runs to 99 residues: PqqA binding protein (99 aa).

This sequence belongs to the PqqD family. As to quaternary structure, monomer. Interacts with PqqE.

It participates in cofactor biosynthesis; pyrroloquinoline quinone biosynthesis. Functions as a PqqA binding protein and presents PqqA to PqqE, in the pyrroloquinoline quinone (PQQ) biosynthetic pathway. The chain is PqqA binding protein from Acinetobacter baylyi (strain ATCC 33305 / BD413 / ADP1).